Here is a 155-residue protein sequence, read N- to C-terminus: Ribosome maturation factor RimP (155 aa).

Belongs to the RimP family.

It localises to the cytoplasm. Required for maturation of 30S ribosomal subunits. This Exiguobacterium sibiricum (strain DSM 17290 / CCUG 55495 / CIP 109462 / JCM 13490 / 255-15) protein is Ribosome maturation factor RimP.